The sequence spans 198 residues: ATP-dependent Clp protease proteolytic subunit (198 aa).

Ser-101 acts as the Nucleophile in catalysis. His-126 is a catalytic residue.

Belongs to the peptidase S14 family. Component of the chloroplastic Clp protease core complex.

The protein resides in the plastid. It is found in the chloroplast stroma. It catalyses the reaction Hydrolysis of proteins to small peptides in the presence of ATP and magnesium. alpha-casein is the usual test substrate. In the absence of ATP, only oligopeptides shorter than five residues are hydrolyzed (such as succinyl-Leu-Tyr-|-NHMec, and Leu-Tyr-Leu-|-Tyr-Trp, in which cleavage of the -Tyr-|-Leu- and -Tyr-|-Trp bonds also occurs).. Cleaves peptides in various proteins in a process that requires ATP hydrolysis. Has a chymotrypsin-like activity. Plays a major role in the degradation of misfolded proteins. This chain is ATP-dependent Clp protease proteolytic subunit, found in Psilotum nudum (Whisk fern).